Reading from the N-terminus, the 105-residue chain is Small ribosomal subunit protein uS10 (105 aa).

The protein belongs to the universal ribosomal protein uS10 family. Part of the 30S ribosomal subunit.

In terms of biological role, involved in the binding of tRNA to the ribosomes. This is Small ribosomal subunit protein uS10 from Chlamydia muridarum (strain MoPn / Nigg).